A 483-amino-acid polypeptide reads, in one-letter code: Inositol-pentakisphosphate 2-kinase (483 aa).

Residues 140–144 (EIKPK) carry the EXKPK motif motif. Residues 279–298 (SNRSGEPRKMHLSESKPHCE) form a disordered region. Residues 281–297 (RSGEPRKMHLSESKPHC) are compositionally biased toward basic and acidic residues.

Belongs to the IPK1 type 2 family. In terms of tissue distribution, expressed both maternally and zygotically. Expressed in cleavage-stage embryos. Ubiquitously distributed throughout blastula stages of embryogenesis. At the onset of gastrulation, it is enriched in cells around the blastoderm margin. At shield stage, expression is detected in the deep involuted cells that contribute to mesendoderm. During mid and late gastrula stages, it is strongly expressed in axial mesendoderm. However, it is not present in the nascent tailbud at yolk plug closure (YPC) stage. Expression in axial mesendoderm is reduced at the 2 somite stage (SS). At 6 SS, it is expressed in cells surrounding Kupffer's vesicle, but apparently not within. By 10 SS, it is no longer detected as a specific signal above background.

It is found in the cytoplasm. The protein localises to the nucleus. It carries out the reaction 1D-myo-inositol 1,3,4,5,6-pentakisphosphate + ATP = 1D-myo-inositol hexakisphosphate + ADP + H(+). Phosphorylates Ins(1,3,4,5,6)P5 at position 2 to form Ins(1,2,3,4,5,6)P6 (InsP6 or phytate). InsP6 is involved in many processes such as mRNA export, non-homologous end-joining, endocytosis and ion channel regulation. InsP6 also acts as a key regulator of left-right asymmetry in embryo, probably by regulating asymmetric Ca(2+) during left-right specification. This is Inositol-pentakisphosphate 2-kinase (ippk) from Danio rerio (Zebrafish).